Reading from the N-terminus, the 612-residue chain is Dihydroxy-acid dehydratase (612 aa).

Residue aspartate 81 coordinates Mg(2+). Cysteine 122 provides a ligand contact to [2Fe-2S] cluster. Positions 123 and 124 each coordinate Mg(2+). N6-carboxylysine is present on lysine 124. Cysteine 195 provides a ligand contact to [2Fe-2S] cluster. Glutamate 491 is a binding site for Mg(2+). The Proton acceptor role is filled by serine 517.

It belongs to the IlvD/Edd family. Homodimer. The cofactor is [2Fe-2S] cluster. Mg(2+) serves as cofactor.

The catalysed reaction is (2R)-2,3-dihydroxy-3-methylbutanoate = 3-methyl-2-oxobutanoate + H2O. The enzyme catalyses (2R,3R)-2,3-dihydroxy-3-methylpentanoate = (S)-3-methyl-2-oxopentanoate + H2O. It functions in the pathway amino-acid biosynthesis; L-isoleucine biosynthesis; L-isoleucine from 2-oxobutanoate: step 3/4. The protein operates within amino-acid biosynthesis; L-valine biosynthesis; L-valine from pyruvate: step 3/4. In terms of biological role, functions in the biosynthesis of branched-chain amino acids. Catalyzes the dehydration of (2R,3R)-2,3-dihydroxy-3-methylpentanoate (2,3-dihydroxy-3-methylvalerate) into 2-oxo-3-methylpentanoate (2-oxo-3-methylvalerate) and of (2R)-2,3-dihydroxy-3-methylbutanoate (2,3-dihydroxyisovalerate) into 2-oxo-3-methylbutanoate (2-oxoisovalerate), the penultimate precursor to L-isoleucine and L-valine, respectively. This is Dihydroxy-acid dehydratase from Rhizobium johnstonii (strain DSM 114642 / LMG 32736 / 3841) (Rhizobium leguminosarum bv. viciae).